Here is an 883-residue protein sequence, read N- to C-terminus: Translation initiation factor IF-2 (883 aa).

Disordered stretches follow at residues 1–96 (MVDT…RSGM) and 132–259 (QRRA…RGRL). Residues 57–66 (PAEPAAAAPE) show a composition bias toward low complexity. Over residues 72–87 (TPAPPAVSPRQQPRPS) the composition is skewed to pro residues. A compositionally biased stretch (basic and acidic residues) spans 132 to 188 (QRRAAQELVDKAEREAAEVRRKAEEERHRHEEETKRKAETEAKKRFGEAEPAKKPAD). Over residues 191–217 (PASTSTTTTAPRAPVTTTTRPPAVAAE) the composition is skewed to low complexity. Residues 380-551 (PRSPVVTVMG…ALQAELLDLK (172 aa)) form the tr-type G domain. The interval 389–396 (GHVDHGKT) is G1. 389-396 (GHVDHGKT) contributes to the GTP binding site. The segment at 414-418 (GITQH) is G2. Residues 437-440 (DTPG) are G3. Residues 437-441 (DTPGH) and 491-494 (NKID) contribute to the GTP site. Residues 491–494 (NKID) form a G4 region. Positions 527-529 (SAK) are G5.

This sequence belongs to the TRAFAC class translation factor GTPase superfamily. Classic translation factor GTPase family. IF-2 subfamily.

The protein localises to the cytoplasm. Its function is as follows. One of the essential components for the initiation of protein synthesis. Protects formylmethionyl-tRNA from spontaneous hydrolysis and promotes its binding to the 30S ribosomal subunits. Also involved in the hydrolysis of GTP during the formation of the 70S ribosomal complex. The chain is Translation initiation factor IF-2 from Rhodopseudomonas palustris (strain BisB5).